Consider the following 309-residue polypeptide: DNA-directed RNA polymerase subunit alpha (309 aa).

Residues 1 to 227 (MTFQVECVES…ALFEPLKNVS (227 aa)) are alpha N-terminal domain (alpha-NTD). Residues 237 to 309 (EPTPESQTPI…GIKLQESKVS (73 aa)) form an alpha C-terminal domain (alpha-CTD) region.

The protein belongs to the RNA polymerase alpha chain family. In cyanobacteria the RNAP catalytic core is composed of 2 alpha, 1 beta, 1 beta', 1 gamma and 1 omega subunit. When a sigma factor is associated with the core the holoenzyme is formed, which can initiate transcription.

The catalysed reaction is RNA(n) + a ribonucleoside 5'-triphosphate = RNA(n+1) + diphosphate. DNA-dependent RNA polymerase catalyzes the transcription of DNA into RNA using the four ribonucleoside triphosphates as substrates. This Synechococcus elongatus (strain ATCC 33912 / PCC 7942 / FACHB-805) (Anacystis nidulans R2) protein is DNA-directed RNA polymerase subunit alpha.